The sequence spans 182 residues: ATP-dependent protease subunit HslV (182 aa).

Threonine 12 is a catalytic residue. Na(+)-binding residues include alanine 167, cysteine 170, and threonine 173.

It belongs to the peptidase T1B family. HslV subfamily. In terms of assembly, a double ring-shaped homohexamer of HslV is capped on each side by a ring-shaped HslU homohexamer. The assembly of the HslU/HslV complex is dependent on binding of ATP.

It localises to the cytoplasm. The catalysed reaction is ATP-dependent cleavage of peptide bonds with broad specificity.. Allosterically activated by HslU binding. Its function is as follows. Protease subunit of a proteasome-like degradation complex believed to be a general protein degrading machinery. This chain is ATP-dependent protease subunit HslV, found in Chlorobium phaeobacteroides (strain DSM 266 / SMG 266 / 2430).